Reading from the N-terminus, the 87-residue chain is Protein WFDC11 (87 aa).

The N-terminal stretch at 1-25 (MVSLMKLWIPMLMTFFCTVLLSVLG) is a signal peptide.

It is found in the secreted. The chain is Protein WFDC11 (WFDC11) from Homo sapiens (Human).